The chain runs to 842 residues: Probable vinculin (842 aa).

Positions 585–679 (KEARKRLDDV…AAEEEERKRA (95 aa)) form a coiled coil.

It belongs to the vinculin/alpha-catenin family. Monomer. Associates with F-actin. Interacts with aarA, ctxA, ctxB and rgaA. In terms of tissue distribution, epithelium.

The protein resides in the cytoplasm. The protein localises to the cell cortex. It is found in the cell junction. Its function is as follows. Involved in cell adhesion. Thought to play an important role in cytokinesis B, probably by providing substrate adhesion and traction forces. Required to organize and polarize the tip epithelium during cytokinesis. Required for the normal distribution of myosin in the tip epithelium. Involved in the localization of ctxA, ctxB, dcsA, exoc6 and rgaA. Thought to form a complex with ctxA, ctxB, and rgaA which regulates myosin accumulation to the apical plasma membrane. The polypeptide is Probable vinculin (ctnnA) (Dictyostelium discoideum (Social amoeba)).